The following is a 376-amino-acid chain: Glucose-1-phosphate adenylyltransferase (376 aa).

Residues tyrosine 101, glycine 166, 181-182, and serine 192 each bind alpha-D-glucose 1-phosphate; that span reads EK.

It belongs to the bacterial/plant glucose-1-phosphate adenylyltransferase family. In terms of assembly, homotetramer.

It catalyses the reaction alpha-D-glucose 1-phosphate + ATP + H(+) = ADP-alpha-D-glucose + diphosphate. Its pathway is glycan biosynthesis; glycogen biosynthesis. Its function is as follows. Involved in the biosynthesis of ADP-glucose, a building block required for the elongation reactions to produce glycogen. Catalyzes the reaction between ATP and alpha-D-glucose 1-phosphate (G1P) to produce pyrophosphate and ADP-Glc. This is Glucose-1-phosphate adenylyltransferase from Bacillus mycoides (strain KBAB4) (Bacillus weihenstephanensis).